Here is a 400-residue protein sequence, read N- to C-terminus: Nicotinate phosphoribosyltransferase (400 aa).

Histidine 220 is subject to Phosphohistidine; by autocatalysis.

This sequence belongs to the NAPRTase family. In terms of processing, transiently phosphorylated on a His residue during the reaction cycle. Phosphorylation strongly increases the affinity for substrates and increases the rate of nicotinate D-ribonucleotide production. Dephosphorylation regenerates the low-affinity form of the enzyme, leading to product release.

The enzyme catalyses nicotinate + 5-phospho-alpha-D-ribose 1-diphosphate + ATP + H2O = nicotinate beta-D-ribonucleotide + ADP + phosphate + diphosphate. It functions in the pathway cofactor biosynthesis; NAD(+) biosynthesis; nicotinate D-ribonucleotide from nicotinate: step 1/1. Its function is as follows. Catalyzes the synthesis of beta-nicotinate D-ribonucleotide from nicotinate and 5-phospho-D-ribose 1-phosphate at the expense of ATP. The sequence is that of Nicotinate phosphoribosyltransferase from Escherichia coli O7:K1 (strain IAI39 / ExPEC).